The primary structure comprises 405 residues: Alpha-N-acetylgalactosaminidase (405 aa).

3 disulfides stabilise this stretch: cysteine 21–cysteine 63, cysteine 25–cysteine 32, and cysteine 111–cysteine 142. Substrate is bound by residues 61-62 (DD) and lysine 138. Aspartate 140 acts as the Nucleophile in catalysis. N-linked (GlcNAc...) asparagine glycosylation is present at asparagine 161. The cysteines at positions 171 and 193 are disulfide-linked. Serine 172 is a substrate binding site. A glycan (N-linked (GlcNAc...) asparagine) is linked at asparagine 185. The substrate site is built by arginine 197 and aspartate 201. Catalysis depends on aspartate 201, which acts as the Proton donor. A glycan (N-linked (GlcNAc...) asparagine) is linked at asparagine 369.

The protein belongs to the glycosyl hydrolase 27 family. In terms of assembly, homodimer.

The protein localises to the lysosome. The catalysed reaction is Cleavage of non-reducing alpha-(1-&gt;3)-N-acetylgalactosamine residues from human blood group A and AB mucin glycoproteins, Forssman hapten and blood group A lacto series glycolipids.. It catalyses the reaction a neolactoside IV(3)-alpha-GalNAc,IV(2)-alpha-Fuc-nLc4Cer(d18:1(4E)) + H2O = a neolactoside IV(2)-alpha-Fuc-nLc4Cer(d18:1(4E)) + N-acetyl-alpha-D-galactosamine. It carries out the reaction a neolactoside IV(3)-alpha-GalNAc,IV(2)-alpha-Fuc-nLc4Cer(d18:0) + H2O = a neolactoside IV(2)-alpha-Fuc-nLc4Cer(d18:0) + N-acetyl-alpha-D-galactosamine. The enzyme catalyses a globoside IV3GalNAc-Gb4Cer + H2O = N-acetyl-alpha-D-galactosamine + a globoside Gb4Cer. Functionally, removes terminal alpha-N-acetylgalactosamine residues from glycolipids and glycopeptides. Required for the breakdown of glycolipids. The chain is Alpha-N-acetylgalactosaminidase (NAGA) from Gallus gallus (Chicken).